A 343-amino-acid chain; its full sequence is Transmembrane protein 120A (343 aa).

Residues methionine 1–glutamate 132 are Cytoplasmic-facing. Residue lysine 130 coordinates CoA. A helical transmembrane segment spans residues tyrosine 133–arginine 152. Residues phenylalanine 153–arginine 158 lie on the Extracellular side of the membrane. Residues valine 159–isoleucine 177 form a helical membrane-spanning segment. Topologically, residues arginine 178 to lysine 190 are cytoplasmic. The CoA site is built by serine 187 and arginine 188. A helical transmembrane segment spans residues glycine 191–threonine 209. The Extracellular segment spans residues tryptophan 210–lysine 218. Residues phenylalanine 219 to tyrosine 240 form a helical membrane-spanning segment. Residues glutamine 237, tyrosine 240, glutamine 241, and histidine 283 each contribute to the CoA site. At glutamine 241–arginine 270 the chain is on the cytoplasmic side. The chain crosses the membrane as a helical span at residues glycine 271–phenylalanine 294. Over asparagine 295–glutamate 304 the chain is Extracellular. A helical transmembrane segment spans residues tryptophan 305–histidine 330. Residues glutamine 331 to glutamate 343 are Cytoplasmic-facing. Lysine 332 provides a ligand contact to CoA.

The protein belongs to the TMEM120 family. Homodimer. Forms heterooligomer with TMEM120B. Interacts with PKD2; TMEM120A inhibits PKD2 channel activity through the physical association of PKD2 with TMEM120A.

The protein localises to the cell membrane. It localises to the nucleus inner membrane. It is found in the endoplasmic reticulum. Multifunctional protein involved in mechanosensation, and plays an essential role in lipid metabolism and adipocyte differentiation. May function as an ion channel involved in sensing mechanical stimuli. Mediates the mechanosensitivity of the PKD2-TMEM120A channel complex through direct physical interaction. TMEM120A seems to affect mechanosensation by inhibiting PIEZO2 channels, possibly by altering cellular lipid content. TMEM120A is structurally similar to a lipid-modifying enzyme, ELOVL7, and contains a bound coenzyme A molecule, which suggests it might function as an enzyme in lipid metabolism. Additionnaly, implicated in innate immune response against Zika virus. Acts as a key activator of the antiviral signaling involving STING1. The protein is Transmembrane protein 120A of Bos taurus (Bovine).